A 227-amino-acid polypeptide reads, in one-letter code: GFP-like non-fluorescent chromoprotein (227 aa).

The segment at residues 63 to 65 is a cross-link (5-imidazolinone (Ala-Gly)); sequence AYG. Position 64 is a 2,3-didehydrotyrosine (Tyr-64).

The protein belongs to the GFP family. In terms of assembly, homotetramer. Post-translationally, contains a chromophore consisting of modified amino acid residues. The chromophore is formed by autocatalytic backbone condensation between Xaa-N and Gly-(N+2), and oxidation of Tyr-(N+1) to didehydrotyrosine. Maturation of the chromophore requires nothing other than molecular oxygen. The precise stereochemistry of the tyrosine has not been determined.

Non-fluorescent pigment protein that is mauve in color. The wild-type form is non-fluorescent. This chain is GFP-like non-fluorescent chromoprotein, found in Condylactis gigantea (Giant Caribbean anemone).